Consider the following 672-residue polypeptide: DNA mismatch repair protein MutL (672 aa).

Polar residues predominate over residues 443–454; sequence SYTSDSNQYENS. The tract at residues 443–469 is disordered; it reads SYTSDSNQYENSCKSDVDKESKSKTTG. The span at 455 to 465 shows a compositional bias: basic and acidic residues; sequence CKSDVDKESKS.

This sequence belongs to the DNA mismatch repair MutL/HexB family.

This protein is involved in the repair of mismatches in DNA. It is required for dam-dependent methyl-directed DNA mismatch repair. May act as a 'molecular matchmaker', a protein that promotes the formation of a stable complex between two or more DNA-binding proteins in an ATP-dependent manner without itself being part of a final effector complex. This Clostridium botulinum (strain Eklund 17B / Type B) protein is DNA mismatch repair protein MutL.